Here is a 403-residue protein sequence, read N- to C-terminus: Phosphoglycerate kinase (403 aa).

Substrate is bound by residues 21–23, Arg-36, 59–62, Arg-119, and Arg-159; these read DFN and HLGR. Residues Lys-214, Gly-301, Glu-332, and 359-362 each bind ATP; that span reads GGDS.

This sequence belongs to the phosphoglycerate kinase family. Monomer.

The protein localises to the cytoplasm. It catalyses the reaction (2R)-3-phosphoglycerate + ATP = (2R)-3-phospho-glyceroyl phosphate + ADP. Its pathway is carbohydrate degradation; glycolysis; pyruvate from D-glyceraldehyde 3-phosphate: step 2/5. This Lactobacillus johnsonii (strain CNCM I-12250 / La1 / NCC 533) protein is Phosphoglycerate kinase.